We begin with the raw amino-acid sequence, 323 residues long: Magnesium transporter NIPA1 (323 aa).

The Extracellular portion of the chain corresponds to Met1–Ala21. A helical membrane pass occupies residues Val22 to Leu42. Residues Gln43 to Asp60 lie on the Cytoplasmic side of the membrane. The helical transmembrane segment at Ile61–Tyr81 threads the bilayer. A topological domain (extracellular) is located at residue Thr82. The helical transmembrane segment at Ala83–Leu103 threads the bilayer. Residues Ala104–Lys111 are Cytoplasmic-facing. Residues Leu112–Ile132 traverse the membrane as a helical segment. At His133–Pro153 the chain is on the extracellular side. Residues Val154–Ala174 form a helical membrane-spanning segment. Residues Pro175 to His177 lie on the Cytoplasmic side of the membrane. A helical membrane pass occupies residues Gly178–Pro198. Over Ser199–Gln218 the chain is Extracellular. Residues Arg219–Phe239 form a helical membrane-spanning segment. Residues Arg240–Val253 lie on the Cytoplasmic side of the membrane. A helical membrane pass occupies residues Phe254–Phe274. Over Arg275–Asp284 the chain is Extracellular. The chain crosses the membrane as a helical span at residues Phe285–Phe305. Topologically, residues Lys306 to Asp323 are cytoplasmic.

This sequence belongs to the NIPA family. Homodimer. In terms of tissue distribution, widely expressed. Predominantly expressed in neuronal tissues. Brain, heart, kidney, liver and colon (at protein level).

Its subcellular location is the cell membrane. The protein localises to the early endosome. The catalysed reaction is Mg(2+)(in) = Mg(2+)(out). In terms of biological role, acts as a Mg(2+) transporter. Can also transport other divalent cations such as Fe(2+), Sr(2+), Ba(2+), Zn(2+) and Co(2+) but to a much less extent than Mg(2+). The polypeptide is Magnesium transporter NIPA1 (Nipa1) (Mus musculus (Mouse)).